The chain runs to 471 residues: (13S,14R)-1,13-dihydroxy-N-methylcanadine 13-O-acetyltransferase AT1 (471 aa).

Belongs to the plant acyltransferase family.

It carries out the reaction (13S,14R)-1,13-dihydroxy-N-methylcanadine + acetyl-CoA = (13S,14R)-13-O-acetyl-1-hydroxy-N-methylcanadine + CoA. It functions in the pathway alkaloid biosynthesis. In terms of biological role, acetyltransferase involved in the biosynthesis of the benzylisoquinoline alkaloid noscapine. Converts (13S,14R)-1,13-dihydroxy-N-methylcanadine to (13S,14R)-13-O-acetyl-1-hydroxy-N-methylcanadine. This Papaver somniferum (Opium poppy) protein is (13S,14R)-1,13-dihydroxy-N-methylcanadine 13-O-acetyltransferase AT1.